Here is a 132-residue protein sequence, read N- to C-terminus: Small ribosomal subunit protein uS8 (132 aa).

The protein belongs to the universal ribosomal protein uS8 family. Part of the 30S ribosomal subunit. Contacts proteins S5 and S12.

One of the primary rRNA binding proteins, it binds directly to 16S rRNA central domain where it helps coordinate assembly of the platform of the 30S subunit. The chain is Small ribosomal subunit protein uS8 from Oceanobacillus iheyensis (strain DSM 14371 / CIP 107618 / JCM 11309 / KCTC 3954 / HTE831).